The primary structure comprises 200 residues: Probable molybdenum cofactor guanylyltransferase (200 aa).

Residues 9 to 11 (LAG), Lys21, Asp69, and Asp100 contribute to the GTP site. Asp100 is a binding site for Mg(2+).

This sequence belongs to the MobA family. Requires Mg(2+) as cofactor.

Its subcellular location is the cytoplasm. It catalyses the reaction Mo-molybdopterin + GTP + H(+) = Mo-molybdopterin guanine dinucleotide + diphosphate. Its function is as follows. Transfers a GMP moiety from GTP to Mo-molybdopterin (Mo-MPT) cofactor (Moco or molybdenum cofactor) to form Mo-molybdopterin guanine dinucleotide (Mo-MGD) cofactor. The sequence is that of Probable molybdenum cofactor guanylyltransferase from Bacillus anthracis (strain CDC 684 / NRRL 3495).